The primary structure comprises 510 residues: Histidine ammonia-lyase (510 aa).

Residues 143–145 constitute a cross-link (5-imidazolinone (Ala-Gly)); sequence ASG. S144 carries the 2,3-didehydroalanine (Ser) modification.

It belongs to the PAL/histidase family. In terms of processing, contains an active site 4-methylidene-imidazol-5-one (MIO), which is formed autocatalytically by cyclization and dehydration of residues Ala-Ser-Gly.

It localises to the cytoplasm. It carries out the reaction L-histidine = trans-urocanate + NH4(+). Its pathway is amino-acid degradation; L-histidine degradation into L-glutamate; N-formimidoyl-L-glutamate from L-histidine: step 1/3. The chain is Histidine ammonia-lyase from Aliivibrio fischeri (strain ATCC 700601 / ES114) (Vibrio fischeri).